The primary structure comprises 537 residues: Nedd4 binding protein 3 (537 aa).

S172 is modified (phosphoserine). Disordered regions lie at residues 173–234, 327–359, and 422–456; these read LDEG…VLSC, RKELRAQQGLAPEPRTSGPPMEADPNARPEEEA, and LQEQAPREEAPGSCETDDCKSRGLLGEAGGNEARE. Positions 178–207 are enriched in low complexity; it reads PEPSLSDSSSGGSFGRSPGTGPSPFSSSLG. A coiled-coil region spans residues 295–523; that stretch reads VDRLHEVAQK…LEQELRVLRE (229 aa).

Belongs to the N4BP3 family. In terms of assembly, binds NEDD4. Interacts with 14-3-3 proteins. Interacts with MAVS.

The protein resides in the cytoplasmic vesicle. The protein localises to the cell projection. It localises to the axon. Its subcellular location is the dendrite. Its function is as follows. Plays a positive role in the antiviral innate immune signaling pathway. Mechanistically, interacts with MAVS and functions as a positive regulator to promote 'Lys-63'-linked polyubiquitination of MAVS and thus strengthens the interaction between MAVS and TRAF2. Also plays a role in axon and dendrite arborization during cranial nerve development. May also be important for neural crest migration and early development of other anterior structures including eye, brain and cranial cartilage. In Rattus norvegicus (Rat), this protein is Nedd4 binding protein 3.